Reading from the N-terminus, the 484-residue chain is Secreted RxLR effector protein 104 (484 aa).

The signal sequence occupies residues 1 to 24; sequence MRSAYPVLTALLVVASSQIAAGSG. The RxLR-dEER signature appears at 48 to 65; sequence RFLRGSRDVHNNVANEER. A glycan (N-linked (GlcNAc...) asparagine) is linked at asparagine 175. The segment at 324 to 463 is disordered; it reads ENPKGQSPYP…SSSVLTPEDV (140 aa). Residues 327-346 show a composition bias toward polar residues; sequence KGQSPYPSTPLTAASTSKGG. The span at 402-413 shows a compositional bias: low complexity; it reads SSSSGPSRAFAP. A compositionally biased stretch (polar residues) spans 418–428; sequence DQTFITENSRL.

Belongs to the RxLR effector family.

It localises to the secreted. It is found in the host nucleus. Functionally, secreted effector that completely suppresses the host cell death induced by cell death-inducing proteins. This Plasmopara viticola (Downy mildew of grapevine) protein is Secreted RxLR effector protein 104.